A 142-amino-acid chain; its full sequence is Large ribosomal subunit protein uL11 (142 aa).

This sequence belongs to the universal ribosomal protein uL11 family. In terms of assembly, part of the ribosomal stalk of the 50S ribosomal subunit. Interacts with L10 and the large rRNA to form the base of the stalk. L10 forms an elongated spine to which L12 dimers bind in a sequential fashion forming a multimeric L10(L12)X complex. Post-translationally, one or more lysine residues are methylated.

Forms part of the ribosomal stalk which helps the ribosome interact with GTP-bound translation factors. The polypeptide is Large ribosomal subunit protein uL11 (Sinorhizobium fredii (strain NBRC 101917 / NGR234)).